Consider the following 311-residue polypeptide: N-acetylmuramic acid 6-phosphate etherase (311 aa).

Positions 66–229 (VAVRMARGGR…STITMIRLGK (164 aa)) constitute an SIS domain. Glu-94 (proton donor) is an active-site residue. Residue Glu-125 is part of the active site.

The protein belongs to the GCKR-like family. MurNAc-6-P etherase subfamily. As to quaternary structure, homodimer.

It carries out the reaction N-acetyl-D-muramate 6-phosphate + H2O = N-acetyl-D-glucosamine 6-phosphate + (R)-lactate. It participates in amino-sugar metabolism; N-acetylmuramate degradation. Its function is as follows. Specifically catalyzes the cleavage of the D-lactyl ether substituent of MurNAc 6-phosphate, producing GlcNAc 6-phosphate and D-lactate. The polypeptide is N-acetylmuramic acid 6-phosphate etherase (Streptomyces coelicolor (strain ATCC BAA-471 / A3(2) / M145)).